Here is a 478-residue protein sequence, read N- to C-terminus: Ribulose bisphosphate carboxylase large chain (478 aa).

Residues 1–2 (MS) constitute a propeptide that is removed on maturation. An N-acetylproline modification is found at Pro3. Lys14 carries the N6,N6,N6-trimethyllysine modification. 2 residues coordinate substrate: Asn123 and Thr173. Lys175 acts as the Proton acceptor in catalysis. Lys177 contacts substrate. Positions 201, 203, and 204 each coordinate Mg(2+). N6-carboxylysine is present on Lys201. His294 acts as the Proton acceptor in catalysis. Substrate is bound by residues Arg295, His327, and Ser379.

The protein belongs to the RuBisCO large chain family. Type I subfamily. In terms of assembly, heterohexadecamer of 8 large chains and 8 small chains; disulfide-linked. The disulfide link is formed within the large subunit homodimers. The cofactor is Mg(2+). The disulfide bond which can form in the large chain dimeric partners within the hexadecamer appears to be associated with oxidative stress and protein turnover.

It is found in the plastid. Its subcellular location is the chloroplast. It carries out the reaction 2 (2R)-3-phosphoglycerate + 2 H(+) = D-ribulose 1,5-bisphosphate + CO2 + H2O. It catalyses the reaction D-ribulose 1,5-bisphosphate + O2 = 2-phosphoglycolate + (2R)-3-phosphoglycerate + 2 H(+). In terms of biological role, ruBisCO catalyzes two reactions: the carboxylation of D-ribulose 1,5-bisphosphate, the primary event in carbon dioxide fixation, as well as the oxidative fragmentation of the pentose substrate in the photorespiration process. Both reactions occur simultaneously and in competition at the same active site. The polypeptide is Ribulose bisphosphate carboxylase large chain (Lemna minor (Common duckweed)).